Here is a 170-residue protein sequence, read N- to C-terminus: MORN repeat-containing protein 5 (170 aa).

MORN repeat units follow at residues 8 to 30 (YFGE…TDTR), 31 to 53 (YIGE…SGSR), and 54 to 75 (FDAI…DGLQ).

As to expression, only detected in testis (at protein level).

Its subcellular location is the cell projection. It localises to the cilium. The protein localises to the flagellum. In Mus musculus (Mouse), this protein is MORN repeat-containing protein 5 (Morn5).